Consider the following 337-residue polypeptide: MARMFYDADANLENLKGKTIAVMGFGSQGHAQAQNLKESGLNVIVGLRKPFDEASEKEWNAVIAAGITPMSVAEAAEAADVIQILLPDEVQARVYNAEIKPYLKAGNALGFSHGFNIHFGQIVPPAFVDVFMVAPKSPGHLVRRMYVKGAGVPGLVAVQQDYSGKAKDLALAYACGIGCTRAGVIETSFQEETETDLFGEQCVLCGGVTELVKAGFETLVEAGYQPEIAYFECMHELKLIVDLMYEGGMSYMRYSISDTAEWGDYTKGPEIIGEEARYAMYEALQDIQDGSFAKGWLLENMVGRPRFNALKRQNREHLIEEVGAELRGMMPWLKETK.

Positions A2–T187 constitute a KARI N-terminal Rossmann domain. Residues F25–Q28, R48, and D88–Q91 each bind NADP(+). H113 is an active-site residue. G139 contributes to the NADP(+) binding site. One can recognise a KARI C-terminal knotted domain in the interval S188–L333. Mg(2+) contacts are provided by D196, E200, E232, and E236. A substrate-binding site is contributed by S257.

This sequence belongs to the ketol-acid reductoisomerase family. Requires Mg(2+) as cofactor.

It carries out the reaction (2R)-2,3-dihydroxy-3-methylbutanoate + NAD(+) = (2S)-2-acetolactate + NADH + H(+). It catalyses the reaction (2R)-2,3-dihydroxy-3-methylbutanoate + NADP(+) = (2S)-2-acetolactate + NADPH + H(+). The protein operates within amino-acid biosynthesis; L-isoleucine biosynthesis; L-isoleucine from 2-oxobutanoate: step 2/4. It participates in amino-acid biosynthesis; L-valine biosynthesis; L-valine from pyruvate: step 2/4. Its function is as follows. Involved in the biosynthesis of branched-chain amino acids (BCAA). Catalyzes an alkyl-migration followed by a ketol-acid reduction of (S)-2-acetolactate (S2AL) to yield (R)-2,3-dihydroxy-isovalerate. In the isomerase reaction, S2AL is rearranged via a Mg-dependent methyl migration to produce 3-hydroxy-3-methyl-2-ketobutyrate (HMKB). In the reductase reaction, this 2-ketoacid undergoes a metal-dependent reduction by NADPH or NADH to yield (R)-2,3-dihydroxy-isovalerate. The sequence is that of Ketol-acid reductoisomerase (NAD(P)(+)) from Syntrophomonas wolfei subsp. wolfei (strain DSM 2245B / Goettingen).